A 209-amino-acid chain; its full sequence is Uracil phosphoribosyltransferase (209 aa).

5-phospho-alpha-D-ribose 1-diphosphate contacts are provided by residues arginine 79, arginine 104, and 131–139; that span reads DPMLATGGS. Uracil contacts are provided by residues isoleucine 194 and 199–201; that span reads GDA. 5-phospho-alpha-D-ribose 1-diphosphate is bound at residue aspartate 200.

This sequence belongs to the UPRTase family. Mg(2+) is required as a cofactor.

It catalyses the reaction UMP + diphosphate = 5-phospho-alpha-D-ribose 1-diphosphate + uracil. It participates in pyrimidine metabolism; UMP biosynthesis via salvage pathway; UMP from uracil: step 1/1. With respect to regulation, allosterically activated by GTP. Catalyzes the conversion of uracil and 5-phospho-alpha-D-ribose 1-diphosphate (PRPP) to UMP and diphosphate. In Bacillus velezensis (strain DSM 23117 / BGSC 10A6 / LMG 26770 / FZB42) (Bacillus amyloliquefaciens subsp. plantarum), this protein is Uracil phosphoribosyltransferase.